Here is a 290-residue protein sequence, read N- to C-terminus: ATP synthase gamma chain (290 aa).

The protein belongs to the ATPase gamma chain family. F-type ATPases have 2 components, CF(1) - the catalytic core - and CF(0) - the membrane proton channel. CF(1) has five subunits: alpha(3), beta(3), gamma(1), delta(1), epsilon(1). CF(0) has three main subunits: a, b and c.

The protein localises to the cell inner membrane. Its function is as follows. Produces ATP from ADP in the presence of a proton gradient across the membrane. The gamma chain is believed to be important in regulating ATPase activity and the flow of protons through the CF(0) complex. This is ATP synthase gamma chain from Anaeromyxobacter sp. (strain K).